The primary structure comprises 221 residues: MKFFIDTANLDEIKEAHSLGILDGVTTNPSLIAKEGIANREDFIRHIKTICELIQAPVSAEAVSTDAEKMIVEARSLAAIDPHVVVKIPMTIDGLKAVRQLSEEGIKTNVTLVFSPLQALMAAKAGATYISPFVGRLDDISADGMNLVEEILEIFSNYLFETEIIVASVRNPLHVLAAAKLGADIATIPFKVIDQLAHHPLTDLGVERFLKDWEKVEKQRV.

The active-site Schiff-base intermediate with substrate is the K87.

This sequence belongs to the transaldolase family. Type 3B subfamily.

The protein resides in the cytoplasm. It carries out the reaction D-sedoheptulose 7-phosphate + D-glyceraldehyde 3-phosphate = D-erythrose 4-phosphate + beta-D-fructose 6-phosphate. It functions in the pathway carbohydrate degradation; pentose phosphate pathway; D-glyceraldehyde 3-phosphate and beta-D-fructose 6-phosphate from D-ribose 5-phosphate and D-xylulose 5-phosphate (non-oxidative stage): step 2/3. Functionally, transaldolase is important for the balance of metabolites in the pentose-phosphate pathway. The protein is Probable transaldolase of Syntrophobacter fumaroxidans (strain DSM 10017 / MPOB).